The primary structure comprises 931 residues: Aconitate hydratase A (931 aa).

A disordered region spans residues 402–454 (SASPVDEASAESFPASDAPAYGSQENGAGAPQHADGTGAAVPSNPVTVTAPDG). [4Fe-4S] cluster contacts are provided by C472, C538, and C541.

Belongs to the aconitase/IPM isomerase family. [4Fe-4S] cluster serves as cofactor.

It catalyses the reaction citrate = D-threo-isocitrate. It carries out the reaction citrate = cis-aconitate + H2O. The catalysed reaction is cis-aconitate + H2O = D-threo-isocitrate. It functions in the pathway carbohydrate metabolism; tricarboxylic acid cycle; isocitrate from oxaloacetate: step 2/2. Its function is as follows. Catalyzes the reversible isomerization of citrate to isocitrate via cis-aconitate in the tricarboxylic acid (TCA) cycle. Aconitase activity is important for the initiation of morphological and physiological differentiation of S.viridochromogenes. In addition, the apo form of AcnA (lacking the [4Fe-4S] cluster) functions as a RNA-binding regulatory protein, which binds to iron responsive elements (IREs) located on the untranslated region of certain mRNAs, including recA and ftsZ. Binding to IRE-like structures probably alters the target mRNA stability and regulates the protein amount. The apo form plays a regulatory role in oxidative stress response. This chain is Aconitate hydratase A, found in Streptomyces viridochromogenes (strain DSM 40736 / JCM 4977 / BCRC 1201 / Tue 494).